We begin with the raw amino-acid sequence, 292 residues long: Acetyl-coenzyme A carboxylase carboxyl transferase subunit beta (292 aa).

The CoA carboxyltransferase N-terminal domain maps to 36–292 (MWSKCEKCAK…LLRMHEVDYE (257 aa)). Zn(2+)-binding residues include Cys40, Cys43, Cys59, and Cys62. The C4-type zinc-finger motif lies at 40 to 62 (CEKCAKILYTEDLRENFNVCPNC).

This sequence belongs to the AccD/PCCB family. As to quaternary structure, acetyl-CoA carboxylase is a heterohexamer composed of biotin carboxyl carrier protein (AccB), biotin carboxylase (AccC) and two subunits each of ACCase subunit alpha (AccA) and ACCase subunit beta (AccD). It depends on Zn(2+) as a cofactor.

It is found in the cytoplasm. It carries out the reaction N(6)-carboxybiotinyl-L-lysyl-[protein] + acetyl-CoA = N(6)-biotinyl-L-lysyl-[protein] + malonyl-CoA. The protein operates within lipid metabolism; malonyl-CoA biosynthesis; malonyl-CoA from acetyl-CoA: step 1/1. Its function is as follows. Component of the acetyl coenzyme A carboxylase (ACC) complex. Biotin carboxylase (BC) catalyzes the carboxylation of biotin on its carrier protein (BCCP) and then the CO(2) group is transferred by the transcarboxylase to acetyl-CoA to form malonyl-CoA. This is Acetyl-coenzyme A carboxylase carboxyl transferase subunit beta from Clostridium perfringens (strain 13 / Type A).